The following is a 417-amino-acid chain: NADH-quinone oxidoreductase subunit D (417 aa).

Belongs to the complex I 49 kDa subunit family. NDH-1 is composed of 14 different subunits. Subunits NuoB, C, D, E, F, and G constitute the peripheral sector of the complex.

Its subcellular location is the cell inner membrane. It carries out the reaction a quinone + NADH + 5 H(+)(in) = a quinol + NAD(+) + 4 H(+)(out). NDH-1 shuttles electrons from NADH, via FMN and iron-sulfur (Fe-S) centers, to quinones in the respiratory chain. The immediate electron acceptor for the enzyme in this species is believed to be ubiquinone. Couples the redox reaction to proton translocation (for every two electrons transferred, four hydrogen ions are translocated across the cytoplasmic membrane), and thus conserves the redox energy in a proton gradient. This Burkholderia ambifaria (strain ATCC BAA-244 / DSM 16087 / CCUG 44356 / LMG 19182 / AMMD) (Burkholderia cepacia (strain AMMD)) protein is NADH-quinone oxidoreductase subunit D.